A 103-amino-acid polypeptide reads, in one-letter code: Large ribosomal subunit protein bL21 (103 aa).

The protein belongs to the bacterial ribosomal protein bL21 family. Part of the 50S ribosomal subunit. Contacts protein L20.

Its function is as follows. This protein binds to 23S rRNA in the presence of protein L20. The protein is Large ribosomal subunit protein bL21 of Paraburkholderia phymatum (strain DSM 17167 / CIP 108236 / LMG 21445 / STM815) (Burkholderia phymatum).